A 333-amino-acid polypeptide reads, in one-letter code: Ribosomal RNA small subunit methyltransferase C (333 aa).

Belongs to the methyltransferase superfamily. RsmC family. As to quaternary structure, monomer.

It is found in the cytoplasm. It catalyses the reaction guanosine(1207) in 16S rRNA + S-adenosyl-L-methionine = N(2)-methylguanosine(1207) in 16S rRNA + S-adenosyl-L-homocysteine + H(+). Specifically methylates the guanine in position 1207 of 16S rRNA in the 30S particle. The polypeptide is Ribosomal RNA small subunit methyltransferase C (Mannheimia succiniciproducens (strain KCTC 0769BP / MBEL55E)).